The chain runs to 473 residues: Ribosomal RNA small subunit methyltransferase F (473 aa).

S-adenosyl-L-methionine is bound by residues 123–129, glutamate 147, aspartate 174, and aspartate 192; that span reads AAAPGSK. Cysteine 245 functions as the Nucleophile in the catalytic mechanism.

Belongs to the class I-like SAM-binding methyltransferase superfamily. RsmB/NOP family.

The protein localises to the cytoplasm. The catalysed reaction is cytidine(1407) in 16S rRNA + S-adenosyl-L-methionine = 5-methylcytidine(1407) in 16S rRNA + S-adenosyl-L-homocysteine + H(+). Functionally, specifically methylates the cytosine at position 1407 (m5C1407) of 16S rRNA. The sequence is that of Ribosomal RNA small subunit methyltransferase F from Vibrio atlanticus (strain LGP32) (Vibrio splendidus (strain Mel32)).